The primary structure comprises 1275 residues: Inner capsid protein lambda-1 (1275 aa).

The span at 1-12 shows a compositional bias: basic residues; sequence MKRIPRKTKGKS. The disordered stretch occupies residues 1–149; sequence MKRIPRKTKG…DNEGGSNQKP (149 aa). Basic and acidic residues-rich tracts occupy residues 18–35 and 75–117; these read DSTE…DKQN and NNDE…DKSK. Over residues 118–149 the composition is skewed to polar residues; that stretch reads AQVTYSDTGINNANELSRSGNVDNEGGSNQKP. The C2H2-type zinc-finger motif lies at 181–203; it reads YQCHVCSAVLFSPLDLDAHVASH.

Belongs to the turreted BTV-fold inner capsid family. As to quaternary structure, homodecamer; each decamer is made up of two conformers of VP2, called VP2A and VP2B. 12 homodecamers assemble to form an icosahedral capsid. Interacts with protein mu-NS; in viral inclusions. The cofactor is Mg(2+). Mn(2+) is required as a cofactor.

It localises to the virion. It carries out the reaction ATP + H2O = ADP + phosphate + H(+). Functionally, inner capsid protein that self-assembles to form an icosahedral capsid with a T=2 symmetry, which consists of 120 copies of VP2, with channels at each of its five-fold vertices. This capsid constitutes the innermost concentric layer of the viral mature particle. Displays NTPase, RNA 5'-triphosphatase (RTPase) and RNA helicase activities and probably participates in transcription of the viral genome. Helicase activity might be involved in unwinding or reannealing dsRNA during RNA synthesis. RTPase enzymatic activity represents the first step in RNA capping, which yields a 5'-diphosphorylated plus-strand RNA. This Reovirus type 1 (strain Lang) (T1L) protein is Inner capsid protein lambda-1 (L3).